Here is a 274-residue protein sequence, read N- to C-terminus: MQQLQNIIETAFERRAEITPANADTVTREAVNQVIALLDSGALRVAEKIDGQWVTHQWLKKAVLLSFRINDNQVIEGAESRYFDKVPMKFANYDAARFQKEGFRVVPPAAVRQGAFIARNTVLMPSYVNIGAYVDEGTMVDTWATVGSCAQIGKNVHLSGGVGIGGVLEPLQANPTIIEDNCFIGARSEVVEGVIVEEGSVISMGVYIGQSTRIYDRETGEIHYGRVPAGSVVVSGNLPSKDGKYSLYCAVIVKKVDAKTRGKVGINELLRTID.

Belongs to the transferase hexapeptide repeat family.

It localises to the cytoplasm. The enzyme catalyses (S)-2,3,4,5-tetrahydrodipicolinate + succinyl-CoA + H2O = (S)-2-succinylamino-6-oxoheptanedioate + CoA. The protein operates within amino-acid biosynthesis; L-lysine biosynthesis via DAP pathway; LL-2,6-diaminopimelate from (S)-tetrahydrodipicolinate (succinylase route): step 1/3. The protein is 2,3,4,5-tetrahydropyridine-2,6-dicarboxylate N-succinyltransferase of Escherichia coli (strain SMS-3-5 / SECEC).